Reading from the N-terminus, the 498-residue chain is Mitogen-activated protein kinase 15 (498 aa).

The Protein kinase domain occupies 13-304 (YKIEEVIGKG…AEEALADPYF (292 aa)). ATP is bound by residues 19 to 27 (IGKGSYGVV) and Lys42. Residue Asp139 is the Proton acceptor of the active site. Thr175 is subject to Phosphothreonine. A TXY motif is present at residues 175–177 (TDY). Tyr177 is subject to Phosphotyrosine. Disordered regions lie at residues 388 to 411 (STAAPPERQHNSLPRPSVLYSDDR) and 470 to 498 (STAEQYEHRRTDRNPALATNTVSPRGSYP). Residues 486–498 (LATNTVSPRGSYP) are compositionally biased toward polar residues.

It belongs to the protein kinase superfamily. CMGC Ser/Thr protein kinase family. MAP kinase subfamily. Dually phosphorylated on Thr-175 and Tyr-177, which activates the enzyme.

It catalyses the reaction L-seryl-[protein] + ATP = O-phospho-L-seryl-[protein] + ADP + H(+). The catalysed reaction is L-threonyl-[protein] + ATP = O-phospho-L-threonyl-[protein] + ADP + H(+). Its activity is regulated as follows. Activated by threonine and tyrosine phosphorylation. This Oryza sativa subsp. japonica (Rice) protein is Mitogen-activated protein kinase 15 (MPK15).